Here is a 122-residue protein sequence, read N- to C-terminus: Large ribosomal subunit protein uL14c (122 aa).

The protein belongs to the universal ribosomal protein uL14 family. Part of the 50S ribosomal subunit.

The protein localises to the plastid. It is found in the chloroplast. In terms of biological role, binds to 23S rRNA. The protein is Large ribosomal subunit protein uL14c of Chaetosphaeridium globosum (Charophycean green alga).